Reading from the N-terminus, the 102-residue chain is NAD(P)H-quinone oxidoreductase subunit 4L (102 aa).

3 consecutive transmembrane segments (helical) span residues 4–24 (LQFFLVVAAILFCIGIYGLIV), 33–53 (MSIELMLNAVNLNFMAFSNFV), and 65–85 (VFVITVAAAEAAVGLAIVLGI).

It belongs to the complex I subunit 4L family. As to quaternary structure, NDH-1 can be composed of about 15 different subunits; different subcomplexes with different compositions have been identified which probably have different functions.

It is found in the cellular thylakoid membrane. The catalysed reaction is a plastoquinone + NADH + (n+1) H(+)(in) = a plastoquinol + NAD(+) + n H(+)(out). It catalyses the reaction a plastoquinone + NADPH + (n+1) H(+)(in) = a plastoquinol + NADP(+) + n H(+)(out). NDH-1 shuttles electrons from an unknown electron donor, via FMN and iron-sulfur (Fe-S) centers, to quinones in the respiratory and/or the photosynthetic chain. The immediate electron acceptor for the enzyme in this species is believed to be plastoquinone. Couples the redox reaction to proton translocation, and thus conserves the redox energy in a proton gradient. Cyanobacterial NDH-1 also plays a role in inorganic carbon-concentration. This Synechococcus sp. (strain JA-3-3Ab) (Cyanobacteria bacterium Yellowstone A-Prime) protein is NAD(P)H-quinone oxidoreductase subunit 4L.